A 772-amino-acid polypeptide reads, in one-letter code: Phosphoribosylformylglycinamidine synthase subunit PurL (772 aa).

His62 is a catalytic residue. Positions 65 and 109 each coordinate ATP. Glu111 is a Mg(2+) binding site. Substrate is bound by residues 112 to 115 (SHNH) and Arg134. The active-site Proton acceptor is the His113. A Mg(2+)-binding site is contributed by Asp135. Gln259 provides a ligand contact to substrate. A Mg(2+)-binding site is contributed by Asp287. 331–333 (ESQ) contacts substrate. Asp519 and Gly556 together coordinate ATP. Mg(2+) is bound at residue Asn557. Ser559 lines the substrate pocket.

The protein belongs to the FGAMS family. Monomer. Part of the FGAM synthase complex composed of 1 PurL, 1 PurQ and 2 PurS subunits.

The protein localises to the cytoplasm. The enzyme catalyses N(2)-formyl-N(1)-(5-phospho-beta-D-ribosyl)glycinamide + L-glutamine + ATP + H2O = 2-formamido-N(1)-(5-O-phospho-beta-D-ribosyl)acetamidine + L-glutamate + ADP + phosphate + H(+). It functions in the pathway purine metabolism; IMP biosynthesis via de novo pathway; 5-amino-1-(5-phospho-D-ribosyl)imidazole from N(2)-formyl-N(1)-(5-phospho-D-ribosyl)glycinamide: step 1/2. Part of the phosphoribosylformylglycinamidine synthase complex involved in the purines biosynthetic pathway. Catalyzes the ATP-dependent conversion of formylglycinamide ribonucleotide (FGAR) and glutamine to yield formylglycinamidine ribonucleotide (FGAM) and glutamate. The FGAM synthase complex is composed of three subunits. PurQ produces an ammonia molecule by converting glutamine to glutamate. PurL transfers the ammonia molecule to FGAR to form FGAM in an ATP-dependent manner. PurS interacts with PurQ and PurL and is thought to assist in the transfer of the ammonia molecule from PurQ to PurL. This Leifsonia xyli subsp. xyli (strain CTCB07) protein is Phosphoribosylformylglycinamidine synthase subunit PurL.